Consider the following 485-residue polypeptide: Hexokinase-1 (485 aa).

The region spanning 21–468 (KELMDEIHQL…SGAGAAVIAA (448 aa)) is the Hexokinase domain. A hexokinase small subdomain region spans residues 75–209 (TGKESGNYLA…ELPIEIVALI (135 aa)). ATP-binding positions include 86-91 (DLGGTN) and K111. Residues S158, 175–176 (TK), 210–211 (ND), and N237 each bind substrate. Residues 210 to 457 (NDTVGTLIAS…DPITIVPAED (248 aa)) form a hexokinase large subdomain region. Position 245 is a phosphoserine (S245). E269 serves as a coordination point for substrate. Position 272 is a phosphoserine (S272). A substrate-binding site is contributed by E302. Residues 307–308 (GY), 344–348 (TSYPA), and 419–423 (SVYNK) contribute to the ATP site.

Belongs to the hexokinase family. As to quaternary structure, homodimer.

It carries out the reaction a D-hexose + ATP = a D-hexose 6-phosphate + ADP + H(+). It catalyses the reaction D-fructose + ATP = D-fructose 6-phosphate + ADP + H(+). The catalysed reaction is D-glucose + ATP = D-glucose 6-phosphate + ADP + H(+). Its pathway is carbohydrate metabolism; hexose metabolism. It functions in the pathway carbohydrate degradation; glycolysis; D-glyceraldehyde 3-phosphate and glycerone phosphate from D-glucose: step 1/4. With respect to regulation, subject to allosteric control. Substrate inhibition by ATP. Its function is as follows. Catalyzes the phosphorylation of hexose, such as D-glucose and D-fructose, to hexose 6-phosphate (D-glucose 6-phosphate and D-fructose 6-phosphate, respectively). Mediates the initial step of glycolysis by catalyzing phosphorylation of D-glucose to D-glucose 6-phosphate. The polypeptide is Hexokinase-1 (HXK1) (Saccharomyces cerevisiae (strain ATCC 204508 / S288c) (Baker's yeast)).